The following is a 701-amino-acid chain: Polyribonucleotide nucleotidyltransferase (701 aa).

2 residues coordinate Mg(2+): aspartate 487 and aspartate 493. A KH domain is found at 554–613 (PTMIAMKIDTDKIRDVIGKGGATIRAICEETKASIDIEDDGSIKIFGETKEAAEAAKQRI). The 69-residue stretch at 623-691 (GKIYVGKVER…NRGRIKLSIK (69 aa)) folds into the S1 motif domain.

Belongs to the polyribonucleotide nucleotidyltransferase family. As to quaternary structure, component of the RNA degradosome, which is a multiprotein complex involved in RNA processing and mRNA degradation. Requires Mg(2+) as cofactor.

It is found in the cytoplasm. It catalyses the reaction RNA(n+1) + phosphate = RNA(n) + a ribonucleoside 5'-diphosphate. In terms of biological role, involved in mRNA degradation. Catalyzes the phosphorolysis of single-stranded polyribonucleotides processively in the 3'- to 5'-direction. This is Polyribonucleotide nucleotidyltransferase from Pseudomonas putida (strain GB-1).